The sequence spans 180 residues: Peptidyl-tRNA hydrolase (180 aa).

Tyrosine 13 is a binding site for tRNA. Histidine 18 acts as the Proton acceptor in catalysis. Residues tyrosine 58, asparagine 60, and asparagine 100 each coordinate tRNA.

Belongs to the PTH family. Monomer.

It is found in the cytoplasm. The catalysed reaction is an N-acyl-L-alpha-aminoacyl-tRNA + H2O = an N-acyl-L-amino acid + a tRNA + H(+). Its function is as follows. Hydrolyzes ribosome-free peptidyl-tRNAs (with 1 or more amino acids incorporated), which drop off the ribosome during protein synthesis, or as a result of ribosome stalling. In terms of biological role, catalyzes the release of premature peptidyl moieties from peptidyl-tRNA molecules trapped in stalled 50S ribosomal subunits, and thus maintains levels of free tRNAs and 50S ribosomes. In Fervidobacterium nodosum (strain ATCC 35602 / DSM 5306 / Rt17-B1), this protein is Peptidyl-tRNA hydrolase.